Reading from the N-terminus, the 176-residue chain is Inner membrane-spanning protein YciB (176 aa).

Helical transmembrane passes span 3–23, 49–69, 72–92, 118–138, and 149–169; these read FLFD…WGIF, TMLW…LVLH, KFIQ…LVAA, KLNL…LYVV, and FKLF…SLWL.

It belongs to the YciB family.

The protein localises to the cell inner membrane. Functionally, plays a role in cell envelope biogenesis, maintenance of cell envelope integrity and membrane homeostasis. The sequence is that of Inner membrane-spanning protein YciB from Burkholderia thailandensis (strain ATCC 700388 / DSM 13276 / CCUG 48851 / CIP 106301 / E264).